The sequence spans 91 residues: YcgL domain-containing protein ETA_15380 (91 aa).

Residues 1 to 85 (MFCVIYRSPQ…PLESLLKIHL (85 aa)) enclose the YcgL domain.

The sequence is that of YcgL domain-containing protein ETA_15380 from Erwinia tasmaniensis (strain DSM 17950 / CFBP 7177 / CIP 109463 / NCPPB 4357 / Et1/99).